Here is a 404-residue protein sequence, read N- to C-terminus: uncharacterized protein (404 aa).

Positions 1–21 (MRKLGLALSIMGLLLVSIVAG) are cleaved as a signal peptide. The residue at position 22 (Cys22) is an N-acetylcysteine. Cys22 carries the S-archaeol cysteine lipid modification.

This sequence belongs to the BMP lipoprotein family.

The protein localises to the cell membrane. This is an uncharacterized protein from Pyrococcus abyssi (strain GE5 / Orsay).